Consider the following 544-residue polypeptide: DNA mismatch repair protein MutL (544 aa).

This sequence belongs to the DNA mismatch repair MutL/HexB family.

In terms of biological role, this protein is involved in the repair of mismatches in DNA. It is required for dam-dependent methyl-directed DNA mismatch repair. May act as a 'molecular matchmaker', a protein that promotes the formation of a stable complex between two or more DNA-binding proteins in an ATP-dependent manner without itself being part of a final effector complex. The chain is DNA mismatch repair protein MutL from Thermodesulfovibrio yellowstonii (strain ATCC 51303 / DSM 11347 / YP87).